A 260-amino-acid polypeptide reads, in one-letter code: Pyridoxine 5'-phosphate synthase (260 aa).

Asparagine 15 contacts 3-amino-2-oxopropyl phosphate. 17–18 (DH) provides a ligand contact to 1-deoxy-D-xylulose 5-phosphate. Arginine 26 lines the 3-amino-2-oxopropyl phosphate pocket. Catalysis depends on histidine 51, which acts as the Proton acceptor. Arginine 53 and histidine 58 together coordinate 1-deoxy-D-xylulose 5-phosphate. The active-site Proton acceptor is the glutamate 78. Threonine 108 serves as a coordination point for 1-deoxy-D-xylulose 5-phosphate. The active-site Proton donor is the histidine 199. 3-amino-2-oxopropyl phosphate is bound by residues glycine 200 and 221-222 (GH).

The protein belongs to the PNP synthase family. As to quaternary structure, homooctamer; tetramer of dimers.

The protein localises to the cytoplasm. It carries out the reaction 3-amino-2-oxopropyl phosphate + 1-deoxy-D-xylulose 5-phosphate = pyridoxine 5'-phosphate + phosphate + 2 H2O + H(+). Its pathway is cofactor biosynthesis; pyridoxine 5'-phosphate biosynthesis; pyridoxine 5'-phosphate from D-erythrose 4-phosphate: step 5/5. Catalyzes the complicated ring closure reaction between the two acyclic compounds 1-deoxy-D-xylulose-5-phosphate (DXP) and 3-amino-2-oxopropyl phosphate (1-amino-acetone-3-phosphate or AAP) to form pyridoxine 5'-phosphate (PNP) and inorganic phosphate. In Cupriavidus pinatubonensis (strain JMP 134 / LMG 1197) (Cupriavidus necator (strain JMP 134)), this protein is Pyridoxine 5'-phosphate synthase.